The sequence spans 164 residues: V-type proton ATPase subunit c3 (164 aa).

Residues M1–P11 are Lumenal-facing. Residues F12–G32 traverse the membrane as a helical segment. The Cytoplasmic segment spans residues T33–S54. Residues I55 to I75 form a helical membrane-spanning segment. Residues S76–H94 lie on the Lumenal side of the membrane. The helical transmembrane segment at L95–G116 threads the bilayer. Residues D117–K128 are Cytoplasmic-facing. A helical membrane pass occupies residues L129 to L154. Topologically, residues S155–E164 are lumenal.

It belongs to the V-ATPase proteolipid subunit family. As to quaternary structure, V-ATPase is a heteromultimeric enzyme composed of a peripheral catalytic V1 complex (components A to H) attached to an integral membrane V0 proton pore complex (components: a, c, c'', d and e). The proteolipid components c and c'' are present as a hexameric ring that forms the proton-conducting pore. In terms of tissue distribution, expressed in leaf, root, flower and silique.

The protein resides in the vacuole membrane. In terms of biological role, proton-conducting pore forming subunit of the membrane integral V0 complex of vacuolar ATPase. V-ATPase is responsible for acidifying a variety of intracellular compartments in eukaryotic cells. The protein is V-type proton ATPase subunit c3 (VHA-c3) of Arabidopsis thaliana (Mouse-ear cress).